The primary structure comprises 381 residues: Succinyl-diaminopimelate desuccinylase (381 aa).

H69 contributes to the Zn(2+) binding site. Residue D71 is part of the active site. A Zn(2+)-binding site is contributed by D103. The Proton acceptor role is filled by E137. The Zn(2+) site is built by E138, E166, and H355.

Belongs to the peptidase M20A family. DapE subfamily. Homodimer. Requires Zn(2+) as cofactor. The cofactor is Co(2+).

It catalyses the reaction N-succinyl-(2S,6S)-2,6-diaminopimelate + H2O = (2S,6S)-2,6-diaminopimelate + succinate. Its pathway is amino-acid biosynthesis; L-lysine biosynthesis via DAP pathway; LL-2,6-diaminopimelate from (S)-tetrahydrodipicolinate (succinylase route): step 3/3. Catalyzes the hydrolysis of N-succinyl-L,L-diaminopimelic acid (SDAP), forming succinate and LL-2,6-diaminopimelate (DAP), an intermediate involved in the bacterial biosynthesis of lysine and meso-diaminopimelic acid, an essential component of bacterial cell walls. In Rickettsia africae (strain ESF-5), this protein is Succinyl-diaminopimelate desuccinylase.